A 369-amino-acid polypeptide reads, in one-letter code: Phosphoribosyl pyrophosphate synthase-associated protein 2 (369 aa).

An N-acetylmethionine modification is found at M1. T5 is subject to Phosphothreonine. 3 positions are modified to phosphoserine: S219, S227, and S233.

The protein belongs to the ribose-phosphate pyrophosphokinase family. Binds to PRPS1 and PRPS2.

In terms of biological role, seems to play a negative regulatory role in 5-phosphoribose 1-diphosphate synthesis. In Pongo abelii (Sumatran orangutan), this protein is Phosphoribosyl pyrophosphate synthase-associated protein 2 (PRPSAP2).